The chain runs to 292 residues: Protease HtpX (292 aa).

Helical transmembrane passes span 4–24 (IILF…ILAV) and 32–52 (IYGL…LSLI). His139 contacts Zn(2+). Glu140 is a catalytic residue. His143 contacts Zn(2+). 2 helical membrane-spanning segments follow: residues 150–170 (ITMT…SRII) and 193–213 (FLFF…ASII). Glu222 lines the Zn(2+) pocket.

This sequence belongs to the peptidase M48B family. Requires Zn(2+) as cofactor.

It localises to the cell membrane. The sequence is that of Protease HtpX from Buchnera aphidicola subsp. Schizaphis graminum (strain Sg).